The primary structure comprises 343 residues: Protein RecA (343 aa).

Glycine 66–threonine 73 contributes to the ATP binding site.

It belongs to the RecA family.

It localises to the cytoplasm. Functionally, can catalyze the hydrolysis of ATP in the presence of single-stranded DNA, the ATP-dependent uptake of single-stranded DNA by duplex DNA, and the ATP-dependent hybridization of homologous single-stranded DNAs. It interacts with LexA causing its activation and leading to its autocatalytic cleavage. This is Protein RecA from Dechloromonas aromatica (strain RCB).